The chain runs to 91 residues: Conotoxin VnMKLT1-021 (91 aa).

The N-terminal stretch at 1-22 (MKLTCVMIVAVLFLTAWTFVTA) is a signal peptide. Residues 23 to 57 (DDPRDGPDTAVGWRKLFSEARDEMKNREASKLNER) constitute a propeptide that is removed on maturation. 3 disulfides stabilise this stretch: C59–C78, C66–C82, and C77–C86.

The protein belongs to the conotoxin O1 superfamily. As to expression, expressed by the venom duct.

Its subcellular location is the secreted. This Conus ventricosus (Mediterranean cone) protein is Conotoxin VnMKLT1-021.